A 380-amino-acid chain; its full sequence is Putative glutamate--cysteine ligase 2 (380 aa).

The protein belongs to the glutamate--cysteine ligase type 2 family. YbdK subfamily.

It carries out the reaction L-cysteine + L-glutamate + ATP = gamma-L-glutamyl-L-cysteine + ADP + phosphate + H(+). ATP-dependent carboxylate-amine ligase which exhibits weak glutamate--cysteine ligase activity. This is Putative glutamate--cysteine ligase 2 from Pseudomonas entomophila (strain L48).